Consider the following 260-residue polypeptide: Diphthine synthase (260 aa).

Residues Leu9, Asp85, Ile88, 113–114 (TA), Leu168, Ala202, and His227 contribute to the S-adenosyl-L-methionine site.

This sequence belongs to the diphthine synthase family. As to quaternary structure, homodimer.

It catalyses the reaction 2-[(3S)-amino-3-carboxypropyl]-L-histidyl-[translation elongation factor 2] + 3 S-adenosyl-L-methionine = diphthine-[translation elongation factor 2] + 3 S-adenosyl-L-homocysteine + 3 H(+). Its pathway is protein modification; peptidyl-diphthamide biosynthesis. S-adenosyl-L-methionine-dependent methyltransferase that catalyzes the trimethylation of the amino group of the modified target histidine residue in translation elongation factor 2 (EF-2), to form an intermediate called diphthine. The three successive methylation reactions represent the second step of diphthamide biosynthesis. This chain is Diphthine synthase, found in Haloquadratum walsbyi (strain DSM 16790 / HBSQ001).